Reading from the N-terminus, the 329-residue chain is Sorting assembly machinery 35 kDa subunit (329 aa).

Component of the mitochondrial outer membrane sorting assembly machinery (SAM or TOB) complex, which at least consists of SAM35, SAM37 and SAM50.

It is found in the mitochondrion outer membrane. In terms of biological role, essential component of the mitochondrial outer membrane sorting assembly machinery (SAM or TOB) complex, which is required for the sorting of proteins with complicated topology, such as beta-barrel proteins, to the mitochondrial outer membrane after import by the TOM complex. This chain is Sorting assembly machinery 35 kDa subunit (SAM35), found in Saccharomyces cerevisiae (strain ATCC 204508 / S288c) (Baker's yeast).